Here is a 433-residue protein sequence, read N- to C-terminus: Adenylosuccinate synthetase (433 aa).

Residues glycine 11 to lysine 17 and glycine 39 to threonine 41 each bind GTP. Residue aspartate 12 is the Proton acceptor of the active site. Residues aspartate 12 and glycine 39 each coordinate Mg(2+). IMP-binding positions include aspartate 12–lysine 15, asparagine 37–histidine 40, threonine 134, arginine 148, asparagine 230, threonine 245, and arginine 309. Histidine 40 acts as the Proton donor in catalysis. Position 305–311 (valine 305–arginine 311) interacts with substrate. Residues arginine 311, lysine 337–aspartate 339, and glycine 419–glycine 421 contribute to the GTP site.

It belongs to the adenylosuccinate synthetase family. Homodimer. The cofactor is Mg(2+).

It localises to the cytoplasm. The catalysed reaction is IMP + L-aspartate + GTP = N(6)-(1,2-dicarboxyethyl)-AMP + GDP + phosphate + 2 H(+). It participates in purine metabolism; AMP biosynthesis via de novo pathway; AMP from IMP: step 1/2. Plays an important role in the de novo pathway and in the salvage pathway of purine nucleotide biosynthesis. Catalyzes the first committed step in the biosynthesis of AMP from IMP. The sequence is that of Adenylosuccinate synthetase from Eremothecium gossypii (strain ATCC 10895 / CBS 109.51 / FGSC 9923 / NRRL Y-1056) (Yeast).